The sequence spans 278 residues: 3-methyl-2-oxobutanoate hydroxymethyltransferase (278 aa).

2 residues coordinate Mg(2+): Asp-43 and Asp-82. 3-methyl-2-oxobutanoate-binding positions include Asp-43 to Ser-44, Asp-82, and Lys-112. Glu-114 contributes to the Mg(2+) binding site. The active-site Proton acceptor is the Glu-181.

Belongs to the PanB family. Homodecamer; pentamer of dimers. Mg(2+) serves as cofactor.

Its subcellular location is the cytoplasm. The enzyme catalyses 3-methyl-2-oxobutanoate + (6R)-5,10-methylene-5,6,7,8-tetrahydrofolate + H2O = 2-dehydropantoate + (6S)-5,6,7,8-tetrahydrofolate. The protein operates within cofactor biosynthesis; (R)-pantothenate biosynthesis; (R)-pantoate from 3-methyl-2-oxobutanoate: step 1/2. In terms of biological role, catalyzes the reversible reaction in which hydroxymethyl group from 5,10-methylenetetrahydrofolate is transferred onto alpha-ketoisovalerate to form ketopantoate. In Bacillus cereus (strain B4264), this protein is 3-methyl-2-oxobutanoate hydroxymethyltransferase.